The chain runs to 198 residues: Probable GTP-binding protein EngB (198 aa).

Residues 22–195 (DLPEIALAGR…WKAIHKFTKT (174 aa)) enclose the EngB-type G domain. Residues 30–37 (GRSNVGKS), 57–61 (GKTQT), 75–78 (DVPG), 142–145 (TKAD), and 174–176 (FSS) contribute to the GTP site. Mg(2+)-binding residues include Ser-37 and Thr-59.

Belongs to the TRAFAC class TrmE-Era-EngA-EngB-Septin-like GTPase superfamily. EngB GTPase family. It depends on Mg(2+) as a cofactor.

Its function is as follows. Necessary for normal cell division and for the maintenance of normal septation. This Bacillus cereus (strain B4264) protein is Probable GTP-binding protein EngB.